Reading from the N-terminus, the 542-residue chain is Propane 2-monooxygenase, hydroxylase component large subunit (542 aa).

The Fe cation site is built by E97, E127, H130, E192, E226, and H229.

It belongs to the TmoA/XamoA family. As to quaternary structure, the propane 2-monooxygenase multicomponent enzyme system is composed of an electron transfer component and a monooxygenase component interacting with the effector protein MimD. The electron transfer component is composed of a reductase (MimB), and the monooxygenase component is formed by a large subunit (MimA) and a small subunit (MimC). Requires the presence of the chaperonin-like protein MimG to ensure a productive folding, resulting of a soluble MimA, which leads to the active form of MimABCD. It depends on Fe(2+) as a cofactor.

The catalysed reaction is propane + NADH + O2 + H(+) = propan-2-ol + NAD(+) + H2O. It carries out the reaction acetone + NADH + O2 + H(+) = hydroxyacetone + NAD(+) + H2O. It catalyses the reaction butan-2-one + NADH + O2 + H(+) = 1-hydroxy-2-butanone + NAD(+) + H2O. The enzyme catalyses phenol + NADH + O2 + H(+) = hydroquinone + NAD(+) + H2O. In terms of biological role, component of the propane 2-monooxygenase multicomponent enzyme system which is involved in the degradation of propane via the O2-dependent hydroxylation of propane. Also involved in the degradation of acetone via the O2-dependent hydroxylation of acetone. Also able to catalyze the oxidation of phenol, methylethylketone (2-butanone), 1-propanol and 2-propanol. This chain is Propane 2-monooxygenase, hydroxylase component large subunit, found in Mycolicibacterium smegmatis (strain ATCC 700084 / mc(2)155) (Mycobacterium smegmatis).